The primary structure comprises 226 residues: V-type proton ATPase subunit E 2 (226 aa).

Belongs to the V-ATPase E subunit family. In terms of assembly, V-ATPase is a heteromultimeric enzyme made up of two complexes: the ATP-hydrolytic V1 complex and the proton translocation V0 complex. The V1 complex consists of three catalytic AB heterodimers that form a heterohexamer, three peripheral stalks each consisting of EG heterodimers, one central rotor including subunits D and F, and the regulatory subunits C and H. The proton translocation complex V0 consists of the proton transport subunit a, a ring of proteolipid subunits c9c'', rotary subunit d, subunits e and f, and the accessory subunits ATP6AP1/Ac45 and ATP6AP2/PRR. Testis specific.

Subunit of the V1 complex of vacuolar(H+)-ATPase (V-ATPase), a multisubunit enzyme composed of a peripheral complex (V1) that hydrolyzes ATP and a membrane integral complex (V0) that translocates protons. V-ATPase is responsible for acidifying and maintaining the pH of intracellular compartments and in some cell types, is targeted to the plasma membrane, where it is responsible for acidifying the extracellular environment. This is V-type proton ATPase subunit E 2 (Atp6v1e2) from Mus musculus (Mouse).